A 559-amino-acid polypeptide reads, in one-letter code: Phosphoinositide 3-phosphatase (559 aa).

One can recognise a Myotubularin phosphatase domain in the interval 120 to 541 (SWKSFLLENE…SSLRWWSASF (422 aa)). Residue C342 is the Phosphocysteine intermediate of the active site.

The protein belongs to the protein-tyrosine phosphatase family. Non-receptor class myotubularin subfamily.

The protein resides in the cytoplasm. It catalyses the reaction a 1,2-diacyl-sn-glycero-3-phospho-(1D-myo-inositol-3-phosphate) + H2O = a 1,2-diacyl-sn-glycero-3-phospho-(1D-myo-inositol) + phosphate. Lipid phosphatase which dephosphorylates phosphatidylinositol 3-monophosphate (PI3P). Involved in the control of PI3P-dependent signaling and in the maintenance of endosomal system integrity. The sequence is that of Phosphoinositide 3-phosphatase from Schizosaccharomyces pombe (strain 972 / ATCC 24843) (Fission yeast).